A 580-amino-acid polypeptide reads, in one-letter code: High affinity choline transporter 1 (580 aa).

Topologically, residues methionine 1–glutamate 6 are extracellular. A helical membrane pass occupies residues glycine 7 to tryptophan 27. Residues arginine 28–aspartate 48 are Cytoplasmic-facing. Residues isoleucine 49–asparagine 69 form a helical membrane-spanning segment. Residues glycine 70–glycine 81 are Extracellular-facing. The helical transmembrane segment at leucine 82–phenylalanine 102 threads the bilayer. Residues alanine 103 to arginine 125 are Cytoplasmic-facing. Residues methionine 126–phenylalanine 146 form a helical membrane-spanning segment. Residues serine 147–serine 164 lie on the Extracellular side of the membrane. The chain crosses the membrane as a helical span at residues valine 165–alanine 185. The Cytoplasmic portion of the chain corresponds to tyrosine 186–glutamine 191. A helical membrane pass occupies residues leucine 192 to valine 212. Over alanine 213–valine 237 the chain is Extracellular. The chain crosses the membrane as a helical span at residues tyrosine 238–phenylalanine 258. Residues glutamine 259–serine 274 lie on the Cytoplasmic side of the membrane. Residues phenylalanine 275–glycine 295 traverse the membrane as a helical segment. Topologically, residues alanine 296 to aspartate 317 are extracellular. Asparagine 301 carries an N-linked (GlcNAc...) asparagine glycan. The chain crosses the membrane as a helical span at residues methionine 318 to glycine 338. Residues alanine 339–glutamate 376 are Cytoplasmic-facing. The chain crosses the membrane as a helical span at residues isoleucine 377–leucine 397. The Extracellular portion of the chain corresponds to leucine 398–tryptophan 406. The chain crosses the membrane as a helical span at residues tyrosine 407–valine 427. The Cytoplasmic portion of the chain corresponds to lysine 428 to alanine 435. A helical membrane pass occupies residues valine 436 to leucine 456. The Extracellular segment spans residues glutamine 457–threonine 481. The chain crosses the membrane as a helical span at residues leucine 482–phenylalanine 502. A mediates interaction with SEC14L1 region spans residues phenylalanine 502–glutamine 580. Residues glutamate 503–glutamine 580 are Cytoplasmic-facing. Positions aspartate 527–valine 532 match the Dileucine-like motif motif.

The protein belongs to the sodium:solute symporter (SSF) (TC 2.A.21) family. Homooligomerizes at cell surface. Interacts with SEC14L1; may regulate SLC5A7. Post-translationally, phosphorylated. Expressed in putamen, spinal cord and medulla. Expressed in cholinergic neurons.

Its subcellular location is the presynaptic cell membrane. The protein localises to the cell projection. It is found in the axon. It localises to the early endosome membrane. The protein resides in the cytoplasmic vesicle. Its subcellular location is the secretory vesicle. The protein localises to the synaptic vesicle membrane. The catalysed reaction is choline(out) + n Na(+)(out) = choline(in) + n Na(+)(in). Choline uptake activity is regulated by SLC5A7/CHT1 internalization (inactive form) from the cell surface and recycling of internalized SLC5A7/CHT1 into the cell surface (active form). Activated by extracellular chloride ion. Specifically inhibited by nanomolar concentrations of hemicholinium 3. Functionally, high-affinity Na(+)-coupled choline transmembrane symporter. Functions as an electrogenic, voltage-dependent transporter with variable charge/choline stoichiometry. Choline uptake and choline-induced current is also Cl(-)-dependent where Cl(-) is likely a regulatory ion rather than cotransported ion. Plays a critical role in acetylcholine (ACh) synthesis by taking up the substrate choline from the synaptic cleft into the presynaptic nerve terminals after neurotransmitter release. SLC5A7/CHT1-mediated choline high-affinity transport in cholinergic neurons is the rate-limiting step for production of ACh, thereby facilitating communication by subsequent action potentials. Localized predominantly in presynaptic terminal intracellular organelles, and translocated to the plasma membrane in active form in response to neuronal activity. This Homo sapiens (Human) protein is High affinity choline transporter 1.